Reading from the N-terminus, the 179-residue chain is Large ribosomal subunit protein uL5 (179 aa).

It belongs to the universal ribosomal protein uL5 family. As to quaternary structure, part of the 50S ribosomal subunit; part of the 5S rRNA/L5/L18/L25 subcomplex. Contacts the 5S rRNA and the P site tRNA. Forms a bridge to the 30S subunit in the 70S ribosome.

Functionally, this is one of the proteins that bind and probably mediate the attachment of the 5S RNA into the large ribosomal subunit, where it forms part of the central protuberance. In the 70S ribosome it contacts protein S13 of the 30S subunit (bridge B1b), connecting the 2 subunits; this bridge is implicated in subunit movement. Contacts the P site tRNA; the 5S rRNA and some of its associated proteins might help stabilize positioning of ribosome-bound tRNAs. The polypeptide is Large ribosomal subunit protein uL5 (Synechococcus sp. (strain RCC307)).